A 100-amino-acid chain; its full sequence is Vesicle-associated membrane protein 3 (100 aa).

Serine 2 is modified (N-acetylserine). Residues 2 to 77 (STGPTAATGS…KRKYWWKNCK (76 aa)) lie on the Cytoplasmic side of the membrane. In terms of domain architecture, v-SNARE coiled-coil homology spans 14 to 74 (RLQQTQNQVD…AKLKRKYWWK (61 aa)). Glycyl lysine isopeptide (Lys-Gly) (interchain with G-Cter in ubiquitin) cross-links involve residues lysine 66, lysine 68, and lysine 77. The chain crosses the membrane as a helical; Anchor for type IV membrane protein span at residues 78 to 98 (MWAIGITVLVIFIIIIIVWVV). At 99–100 (SS) the chain is on the vesicular side.

The protein belongs to the synaptobrevin family. As to quaternary structure, interacts with POPDC1 (via the C-terminus cytoplasmic tail). Interacts with BCAP31; involved in VAMP3 export from the endoplasmic reticulum. Interacts with BAIAP3; this interaction is increased in the presence of calcium. Interacts with PICALM. Post-translationally, ubiquitinated by RNF167 at Lys-66, Lys-68 and Lys-77, regulating the recycling endosome pathway. (Microbial infection) Targeted and hydrolyzed by C.botulinum neurotoxin type B (BoNT/B, botB) which hydrolyzes the 59-Gln-|-Phe-60 bond and probably inhibits neurotransmitter release. In terms of processing, (Microbial infection) Targeted and hydrolyzed by C.botulinum neurotoxin type D (BoNT/D, botD) which hydrolyzes the 42-Lys-|-Leu-43 bond and probably inhibits neurotransmitter release. Note that humans are not known to be infected by C.botulinum type D. Post-translationally, (Microbial infection) Targeted and hydrolyzed by C.botulinum neurotoxin type F (BoNT/F, botF) which hydrolyzes the 41-Gln-|-Lys-42 bond and probably inhibits neurotransmitter release.

It localises to the early endosome membrane. It is found in the recycling endosome membrane. The protein resides in the synapse. The protein localises to the synaptosome. Functionally, SNARE involved in vesicular transport from the late endosomes to the trans-Golgi network. This is Vesicle-associated membrane protein 3 (VAMP3) from Homo sapiens (Human).